The primary structure comprises 149 residues: Arginine repressor (149 aa).

The protein belongs to the ArgR family.

It is found in the cytoplasm. It functions in the pathway amino-acid biosynthesis; L-arginine biosynthesis [regulation]. In terms of biological role, regulates arginine biosynthesis genes. The protein is Arginine repressor of Bacillus mycoides (strain KBAB4) (Bacillus weihenstephanensis).